Here is a 501-residue protein sequence, read N- to C-terminus: MNTMSHKFVLALDEGTTSARAILFDSDLNIVNIGQYEFPQYYPQPGYVEHDPEEIWEAQMLAVKKAISKIDAKQIVAIGITNQRETTVLWDAKSGKPVYNAIVWQDRRTSPITDWLKANYFKMIKDKTGLVPDPYFSASKIKWILDNVPNVREKAERGEIKFGTLDTYLIWRLTNGKAHVTDYSNASRTMLFNINKLECDREILELLKIPESILPEVKPSSEIYGYSEALGNLIPISGDAGDQQAALFGQVAFNVGEIKATYGTGSFILMNIGNNPIRSENLLTTIAWGLEKNKATYALEGSIFITGAAVQWFRDGLRAIDVSDEIEPLASNVEDNGGVYFVPAFVGLGAPYWDPYARGLIIGITRGTTKAHIARAILESMAYQTRDVIEVMQKESGISINSLKVDGGAAKDNLLMQFQADILGIKVIRPKVMETTSMGVAMLAGLGVGLWNSLEELRSIWKVDKEFIPSMSEEKRRALYSGWKEAVKRAMGWAKVVGGQV.

Position 16 (Thr16) interacts with ADP. The ATP site is built by Thr16, Thr17, and Ser18. Thr16 provides a ligand contact to sn-glycerol 3-phosphate. Arg20 provides a ligand contact to ADP. Residues Arg84, Glu85, Tyr135, and Asp242 each coordinate sn-glycerol 3-phosphate. 5 residues coordinate glycerol: Arg84, Glu85, Tyr135, Asp242, and Gln243. ADP-binding residues include Thr264 and Gly307. Positions 264, 307, 311, and 408 each coordinate ATP. Gly408 contacts ADP.

It belongs to the FGGY kinase family.

The enzyme catalyses glycerol + ATP = sn-glycerol 3-phosphate + ADP + H(+). Its pathway is polyol metabolism; glycerol degradation via glycerol kinase pathway; sn-glycerol 3-phosphate from glycerol: step 1/1. Its function is as follows. Key enzyme in the regulation of glycerol uptake and metabolism. Catalyzes the phosphorylation of glycerol to yield sn-glycerol 3-phosphate. The polypeptide is Glycerol kinase 1 (Saccharolobus solfataricus (strain ATCC 35092 / DSM 1617 / JCM 11322 / P2) (Sulfolobus solfataricus)).